A 212-amino-acid chain; its full sequence is Thymidylate kinase (212 aa).

ATP is bound at residue 10-17 (GLEGAGKT).

This sequence belongs to the thymidylate kinase family.

The catalysed reaction is dTMP + ATP = dTDP + ADP. Functionally, phosphorylation of dTMP to form dTDP in both de novo and salvage pathways of dTTP synthesis. The polypeptide is Thymidylate kinase (Serratia proteamaculans (strain 568)).